The sequence spans 182 residues: Ribosome-recycling factor (182 aa).

This sequence belongs to the RRF family.

The protein resides in the cytoplasm. Functionally, responsible for the release of ribosomes from messenger RNA at the termination of protein biosynthesis. May increase the efficiency of translation by recycling ribosomes from one round of translation to another. This is Ribosome-recycling factor from Prochlorococcus marinus (strain MIT 9215).